Reading from the N-terminus, the 254-residue chain is Triosephosphate isomerase (254 aa).

9 to 11 serves as a coordination point for substrate; sequence NWK. The active-site Electrophile is the His-95. Glu-167 functions as the Proton acceptor in the catalytic mechanism. Substrate contacts are provided by residues Gly-173, Ser-213, and 234–235; that span reads GG.

It belongs to the triosephosphate isomerase family. As to quaternary structure, homodimer.

The protein localises to the cytoplasm. The catalysed reaction is D-glyceraldehyde 3-phosphate = dihydroxyacetone phosphate. It participates in carbohydrate biosynthesis; gluconeogenesis. The protein operates within carbohydrate degradation; glycolysis; D-glyceraldehyde 3-phosphate from glycerone phosphate: step 1/1. Functionally, involved in the gluconeogenesis. Catalyzes stereospecifically the conversion of dihydroxyacetone phosphate (DHAP) to D-glyceraldehyde-3-phosphate (G3P). This Roseiflexus sp. (strain RS-1) protein is Triosephosphate isomerase.